We begin with the raw amino-acid sequence, 346 residues long: Glycerol-1-phosphate dehydrogenase [NAD(P)+] (346 aa).

Residues 93–97 and 115–118 each bind NAD(+); these read GTIID and TTAS. Aspartate 120 provides a ligand contact to substrate. Serine 124 lines the NAD(+) pocket. Aspartate 167 provides a ligand contact to substrate. Zn(2+) is bound by residues aspartate 167 and histidine 247. Histidine 251 lines the substrate pocket. Residue histidine 263 coordinates Zn(2+).

It belongs to the glycerol-1-phosphate dehydrogenase family. Zn(2+) serves as cofactor.

It localises to the cytoplasm. It carries out the reaction sn-glycerol 1-phosphate + NAD(+) = dihydroxyacetone phosphate + NADH + H(+). The enzyme catalyses sn-glycerol 1-phosphate + NADP(+) = dihydroxyacetone phosphate + NADPH + H(+). The protein operates within membrane lipid metabolism; glycerophospholipid metabolism. Catalyzes the NAD(P)H-dependent reduction of dihydroxyacetonephosphate (DHAP or glycerone phosphate) to glycerol 1-phosphate (G1P). The G1P thus generated is used as the glycerophosphate backbone of phospholipids in the cellular membranes of Archaea. The protein is Glycerol-1-phosphate dehydrogenase [NAD(P)+] of Pyrococcus furiosus (strain ATCC 43587 / DSM 3638 / JCM 8422 / Vc1).